The chain runs to 121 residues: Large ribosomal subunit protein uL14 (121 aa).

This sequence belongs to the universal ribosomal protein uL14 family. In terms of assembly, part of the 50S ribosomal subunit. Forms a cluster with proteins L3 and L19. In the 70S ribosome, L14 and L19 interact and together make contacts with the 16S rRNA in bridges B5 and B8.

Binds to 23S rRNA. Forms part of two intersubunit bridges in the 70S ribosome. The protein is Large ribosomal subunit protein uL14 of Pseudoalteromonas atlantica (strain T6c / ATCC BAA-1087).